The chain runs to 462 residues: ATP synthase subunit beta (462 aa).

Residue 150 to 157 coordinates ATP; the sequence is GGAGVGKT.

The protein belongs to the ATPase alpha/beta chains family. F-type ATPases have 2 components, CF(1) - the catalytic core - and CF(0) - the membrane proton channel. CF(1) has five subunits: alpha(3), beta(3), gamma(1), delta(1), epsilon(1). CF(0) has three main subunits: a(1), b(2) and c(9-12). The alpha and beta chains form an alternating ring which encloses part of the gamma chain. CF(1) is attached to CF(0) by a central stalk formed by the gamma and epsilon chains, while a peripheral stalk is formed by the delta and b chains.

Its subcellular location is the cell membrane. It carries out the reaction ATP + H2O + 4 H(+)(in) = ADP + phosphate + 5 H(+)(out). Its function is as follows. Produces ATP from ADP in the presence of a proton gradient across the membrane. The catalytic sites are hosted primarily by the beta subunits. This Wigglesworthia glossinidia brevipalpis protein is ATP synthase subunit beta.